The sequence spans 416 residues: Muscle-specific homeobox protein tinman (416 aa).

2 stretches are compositionally biased toward polar residues: residues 1-11 (MLQHHQQQAQS) and 18-33 (YTQS…ADAL). Disordered stretches follow at residues 1–33 (MLQH…ADAL), 246–305 (TASN…RKPR), and 391–416 (VMWP…MQHM). The span at 281–295 (NSISGNSNPGSNSGS) shows a compositional bias: low complexity. Residues 301-360 (KRKPRVLFSQAQVLELECRFRLKKYLTGAEREIIAQKLNLSATQVKIWFQNRRYKSKRGD) constitute a DNA-binding region (homeobox). The span at 397–416 (MQQSQQQQQHHAQQQQMQHM) shows a compositional bias: low complexity.

The protein localises to the nucleus. Functionally, required for the development of heart and visceral muscle; for the formation of somatic muscles. Has a crucial function in the early mesodermal subdivisions. This Drosophila melanogaster (Fruit fly) protein is Muscle-specific homeobox protein tinman (tin).